The primary structure comprises 283 residues: Zinc-finger homeodomain protein 8 (283 aa).

The ZF-HD dimerization-type; degenerate zinc-finger motif lies at 23–68 (YKECMRNHAAAMGGQAFDGCGEYMPASPDSLKCAACGCHRSFHRRA). Disordered regions lie at residues 131-171 (AGRA…TKFT) and 244-283 (GLGT…PISV). Positions 148-161 (GSAGGSGSGGGGIF) are enriched in gly residues. The homeobox DNA-binding region spans 163-226 (RKRFRTKFTP…NHKNQLASSP (64 aa)). Gly residues predominate over residues 244–256 (GLGTGLGTGISGD). Residues 257–266 (GDGDDDDTDD) show a composition bias toward acidic residues. Positions 269–283 (PRAAVSSPSPSPISV) are enriched in low complexity.

Homo- and heterodimer with other ZFHD proteins.

Its subcellular location is the nucleus. Its function is as follows. Putative transcription factor. In Oryza sativa subsp. japonica (Rice), this protein is Zinc-finger homeodomain protein 8 (ZHD8).